An 81-amino-acid polypeptide reads, in one-letter code: Small ribosomal subunit protein bS18 (81 aa).

Belongs to the bacterial ribosomal protein bS18 family. In terms of assembly, part of the 30S ribosomal subunit. Forms a tight heterodimer with protein bS6.

Its function is as follows. Binds as a heterodimer with protein bS6 to the central domain of the 16S rRNA, where it helps stabilize the platform of the 30S subunit. This is Small ribosomal subunit protein bS18 from Leptospira borgpetersenii serovar Hardjo-bovis (strain JB197).